A 245-amino-acid polypeptide reads, in one-letter code: Thiopurine S-methyltransferase (245 aa).

29–40 (WREKWVDGKIGF) contributes to the S-adenosyl-L-methionine binding site. F40 is a substrate binding site. K58 is modified (N6-acetyllysine). S-adenosyl-L-methionine-binding residues include L69, E90, and R152.

Belongs to the class I-like SAM-binding methyltransferase superfamily. TPMT family. As to quaternary structure, monomer.

Its subcellular location is the cytoplasm. The enzyme catalyses S-adenosyl-L-methionine + a thiopurine = S-adenosyl-L-homocysteine + a thiopurine S-methylether.. The polypeptide is Thiopurine S-methyltransferase (TPMT) (Panthera pardus (Leopard)).